The following is a 204-amino-acid chain: Large ribosomal subunit protein bL25 (204 aa).

The protein belongs to the bacterial ribosomal protein bL25 family. CTC subfamily. In terms of assembly, part of the 50S ribosomal subunit; part of the 5S rRNA/L5/L18/L25 subcomplex. Contacts the 5S rRNA. Binds to the 5S rRNA independently of L5 and L18.

This is one of the proteins that binds to the 5S RNA in the ribosome where it forms part of the central protuberance. The protein is Large ribosomal subunit protein bL25 of Pseudomonas aeruginosa (strain LESB58).